Reading from the N-terminus, the 224-residue chain is 4'-phosphopantetheinyl transferase (224 aa).

D107, E109, and E151 together coordinate Mg(2+). The segment at 158 to 189 (GKGLSLPLDSFSVRLKDDGHVSIELPDGHEPC) is peptidyl carrier protein binding.

Belongs to the P-Pant transferase superfamily. Gsp/Sfp/HetI/AcpT family. Requires Mg(2+) as cofactor.

The enzyme catalyses apo-[peptidyl-carrier protein] + CoA = holo-[peptidyl-carrier protein] + adenosine 3',5'-bisphosphate + H(+). Its function is as follows. May activate the peptidyl carrier protein (PCP) domains of surfactin synthetase SRF1/2/3 and iturin A synthetase, by transferring the 4'-phosphopantetheinyl moiety of coenzyme A (CoA) to a serine residue. Required for the coproduction of the lipopeptide antibiotics, iturin A and surfactin. In Bacillus subtilis, this protein is 4'-phosphopantetheinyl transferase (lpa-14).